Here is a 919-residue protein sequence, read N- to C-terminus: GPI ethanolamine phosphate transferase 1 (919 aa).

The Cytoplasmic segment spans residues 1 to 9 (MWNKTRTTL). A helical membrane pass occupies residues 10–30 (LAVGVLFHLFYLWSIFDIYFI). At 31 to 457 (SPLVHGMSPY…TTYNWRFIRT (427 aa)) the chain is on the lumenal side. N-linked (GlcNAc...) asparagine glycans are attached at residues Asn90, Asn138, Asn198, Asn202, Asn286, and Asn312. Residues 458 to 478 (IVTFGFVGWIFFSFIIFLKSF) traverse the membrane as a helical segment. Residues 479-488 (ILENVIDDQK) lie on the Cytoplasmic side of the membrane. Residues 489 to 509 (ASPLSHAVFGSIGILLNWILF) form a helical membrane-spanning segment. At 510-512 (YQH) the chain is on the lumenal side. The helical transmembrane segment at 513 to 533 (SPFNFYMYLLFPLYFWSYIFT) threads the bilayer. Residues 534–553 (NRSVLRSGIKEFFKGTSPWK) lie on the Cytoplasmic side of the membrane. Residues 554–574 (RVLITISIISVYEGIVYGFFH) form a helical membrane-spanning segment. Topologically, residues 575–576 (RW) are lumenal. Residues 577–597 (TFTLITNILAFYPFICGVREL) traverse the membrane as a helical segment. Ser598 is a topological domain (cytoplasmic). A helical membrane pass occupies residues 599 to 619 (VNILWIITSVLLSTFTLFDAV). Over 620–626 (KIEDLNQ) the chain is Lumenal. Residues 627 to 647 (IHLAGLLIILSAFYALYKIHS) traverse the membrane as a helical segment. At 648-655 (RINSYTRA) the chain is on the cytoplasmic side. A helical membrane pass occupies residues 656–676 (IFAIQISLVAAMLAVTHRSVI). The Lumenal segment spans residues 677-687 (SLQLRQGLPRE). The helical transmembrane segment at 688–708 (SQVAGWIIFFVSLFVMPILHY) threads the bilayer. Topologically, residues 709 to 720 (RKPNNDYKVRLL) are cytoplasmic. Residues 721–741 (IIYLTFAPSFIILTISFESLF) traverse the membrane as a helical segment. The Lumenal portion of the chain corresponds to 742–776 (YFLFTSYMVQWIEIENKIKEMKTQKDENWLQVLRV). The helical transmembrane segment at 777 to 797 (SVIGFFLLQVAFFGTGNVASI) threads the bilayer. At 798-807 (SSFSLESVCR) the chain is on the cytoplasmic side. The chain crosses the membrane as a helical span at residues 808 to 828 (LLPIFDPFLMGALLMLKLIIP). At 829–848 (YGLLSTCLGILNLKLNFKDY) the chain is on the lumenal side. The chain crosses the membrane as a helical span at residues 849-869 (TISSLIISMSDILSLNFFYLL). The Cytoplasmic portion of the chain corresponds to 870–885 (RTEGSWLDIGITISNY). Residues 886–906 (CLAILSSLFMLILEVLGHVLL) traverse the membrane as a helical segment. The Lumenal portion of the chain corresponds to 907–919 (KNVIIQDKTKKTQ).

It belongs to the PIGG/PIGN/PIGO family. PIGN subfamily. In terms of assembly, interacts with CSF1; CSF1 channels phosphatidylethanolamine to MCD4 in the endoplasmic reticulum at contact sites to support GPI anchor biosynthesis. In terms of processing, N-glycosylated.

The protein resides in the endoplasmic reticulum membrane. It localises to the golgi apparatus membrane. The protein localises to the vacuole membrane. The protein operates within glycolipid biosynthesis; glycosylphosphatidylinositol-anchor biosynthesis. In terms of biological role, ethanolamine phosphate transferase involved in glycosylphosphatidylinositol-anchor biosynthesis. Transfers ethanolamine phosphate to the first alpha-1,4-linked mannose of the glycosylphosphatidylinositol precursor of GPI-anchor. Ethanolamine phosphate on the alpha-1,4-linked mannose is essential for further mannosylation by GPI10 and is necessary for an efficient recognition of GPI lipids and GPI proteins by the GPI transamidase, for the efficient transport of GPI anchored proteins from endoplasmic reticulum to Golgi and for the physiological incorporation of ceramides into GPI anchors by lipid remodeling. Also involved in non-mitochondrial ATP movements across membrane and participates in Golgi and endoplasmic reticulum function, Also required for the incorporation of BGL2 into the cell wall. This chain is GPI ethanolamine phosphate transferase 1 (MCD4), found in Saccharomyces cerevisiae (strain ATCC 204508 / S288c) (Baker's yeast).